The sequence spans 774 residues: Beta-xylosidase/alpha-L-arabinofuranosidase 2 (774 aa).

The signal sequence occupies residues 1-33; the sequence is MASVENRTPNVSVFLCFFVLFATLLLSGGRVSS. An N-linked (GlcNAc...) asparagine glycan is attached at Asn136. The active site involves Asp303. An N-linked (GlcNAc...) asparagine glycan is attached at Asn437.

Belongs to the glycoside hydrolase 3 family.

The protein localises to the secreted. It localises to the extracellular space. Its subcellular location is the extracellular matrix. It carries out the reaction Hydrolysis of (1-&gt;4)-beta-D-xylans, to remove successive D-xylose residues from the non-reducing termini.. It catalyses the reaction Hydrolysis of terminal non-reducing alpha-L-arabinofuranoside residues in alpha-L-arabinosides.. Its function is as follows. A bifunctional beta-xylosidase/alpha-L-arabinosidase, exo-enzyme that acts synergistically with endohydrolases. Releases xylose and arabinose from cell walls. The chain is Beta-xylosidase/alpha-L-arabinofuranosidase 2 from Medicago sativa subsp. varia (Alfalfa).